The primary structure comprises 259 residues: Ribosomal RNA small subunit methyltransferase A (259 aa).

S-adenosyl-L-methionine is bound by residues Asn13, Leu15, Gly40, Glu61, Asp85, and Asn103.

It belongs to the class I-like SAM-binding methyltransferase superfamily. rRNA adenine N(6)-methyltransferase family. RsmA subfamily.

The protein resides in the cytoplasm. The enzyme catalyses adenosine(1518)/adenosine(1519) in 16S rRNA + 4 S-adenosyl-L-methionine = N(6)-dimethyladenosine(1518)/N(6)-dimethyladenosine(1519) in 16S rRNA + 4 S-adenosyl-L-homocysteine + 4 H(+). Functionally, specifically dimethylates two adjacent adenosines (A1518 and A1519) in the loop of a conserved hairpin near the 3'-end of 16S rRNA in the 30S particle. May play a critical role in biogenesis of 30S subunits. This Neisseria meningitidis serogroup B (strain ATCC BAA-335 / MC58) protein is Ribosomal RNA small subunit methyltransferase A.